The primary structure comprises 122 residues: MSNIYANSYLIIFVFLCLGVLLPIGALTAGRWLRPHVPSDAKATTYESGNNPFHDSRVQFQVRYYLFALLFVIFDIETVFLYPWAVVYDQLGLFALVEMIIFIVLLAIGLIYAWKKKVLRWM.

Helical transmembrane passes span leucine 10–glycine 30, phenylalanine 67–valine 87, and leucine 91–isoleucine 111.

It belongs to the complex I subunit 3 family. NDH-1 is composed of 14 different subunits. Subunits NuoA, H, J, K, L, M, N constitute the membrane sector of the complex.

Its subcellular location is the cell membrane. It catalyses the reaction a quinone + NADH + 5 H(+)(in) = a quinol + NAD(+) + 4 H(+)(out). Its function is as follows. NDH-1 shuttles electrons from NADH, via FMN and iron-sulfur (Fe-S) centers, to quinones in the respiratory chain. The immediate electron acceptor for the enzyme in this species is believed to be a menaquinone. Couples the redox reaction to proton translocation (for every two electrons transferred, four hydrogen ions are translocated across the cytoplasmic membrane), and thus conserves the redox energy in a proton gradient. The protein is NADH-quinone oxidoreductase subunit A of Geobacillus kaustophilus (strain HTA426).